A 452-amino-acid chain; its full sequence is Packaging protein 1 (452 aa).

Positions 1-78 (MLPCRSTGRR…AKPPQRGSLL (78 aa)) are disordered. 173-180 (GPTGCGKS) contributes to the ATP binding site. Residues 442-452 (RAYHVRKNKYQ) are DNA-binding.

Belongs to the adenoviridae packaging protein 1 family. In terms of assembly, homodimer. Part of a genome packaging complex composed of packaging proteins 1, 2 and 3; this complex specifically binds to the packaging sequence on the left end of viral genomic DNA and performs packaging of the viral genome. Interacts with protein 33K.

It is found in the virion. Its subcellular location is the host nucleus. The protein resides in the host nucleoplasm. It localises to the host nucleolus. Its function is as follows. Component of the packaging machinery which encapsidates the viral DNA into preformed capsids and transcriptional activator of the viral major late promoter (MLP). Binds, along with packaging proteins 2 and 3, to the specific packaging sequence on the left end of viral genomic DNA and displays ATPase activity thereby providing the power stroke of the packaging machinery. The activity of packaging protein IVa2 is stimulated by protein 33K which acts as a terminase. May be the protein that pumps DNA into the capsid powered by ATP hydrolysis. Specifically binds to the 5'-CG-3' nucleotides of the repeats making up the packaging sequence. Component of the DEF-A and DEF-B transcription factors that bind downstream elements of the major late promoter (MLP), and stimulate transcription from the MLP after initiation of viral DNA replication. DEF-A is a heterodimer packaging proteins 1 and 2 and DEF-B is a homodimer of packaging protein 1. The sequence is that of Packaging protein 1 from Homo sapiens (Human).